A 137-amino-acid chain; its full sequence is Holo-[acyl-carrier-protein] synthase (137 aa).

Mg(2+)-binding residues include Asp-8 and Glu-57.

Belongs to the P-Pant transferase superfamily. AcpS family. Mg(2+) serves as cofactor.

It is found in the cytoplasm. It catalyses the reaction apo-[ACP] + CoA = holo-[ACP] + adenosine 3',5'-bisphosphate + H(+). Transfers the 4'-phosphopantetheine moiety from coenzyme A to a Ser of acyl-carrier-protein. This chain is Holo-[acyl-carrier-protein] synthase, found in Hyphomonas neptunium (strain ATCC 15444).